Consider the following 212-residue polypeptide: Pyridoxine/pyridoxamine 5'-phosphate oxidase (212 aa).

The interval 1 to 20 (MSDSAMEPQNPLTSGDFTAA) is disordered. FMN contacts are provided by residues 59-64 (RMVLLK), 74-75 (YT), lysine 81, and glutamine 103. Lysine 64 is a substrate binding site. Substrate is bound by residues tyrosine 121, arginine 125, and serine 129. FMN-binding positions include 138–139 (QS) and tryptophan 183. 189-191 (RLH) is a substrate binding site. An FMN-binding site is contributed by arginine 193.

This sequence belongs to the pyridoxamine 5'-phosphate oxidase family. Homodimer. The cofactor is FMN.

The catalysed reaction is pyridoxamine 5'-phosphate + O2 + H2O = pyridoxal 5'-phosphate + H2O2 + NH4(+). It carries out the reaction pyridoxine 5'-phosphate + O2 = pyridoxal 5'-phosphate + H2O2. It functions in the pathway cofactor metabolism; pyridoxal 5'-phosphate salvage; pyridoxal 5'-phosphate from pyridoxamine 5'-phosphate: step 1/1. Its pathway is cofactor metabolism; pyridoxal 5'-phosphate salvage; pyridoxal 5'-phosphate from pyridoxine 5'-phosphate: step 1/1. Functionally, catalyzes the oxidation of either pyridoxine 5'-phosphate (PNP) or pyridoxamine 5'-phosphate (PMP) into pyridoxal 5'-phosphate (PLP). This Azorhizobium caulinodans (strain ATCC 43989 / DSM 5975 / JCM 20966 / LMG 6465 / NBRC 14845 / NCIMB 13405 / ORS 571) protein is Pyridoxine/pyridoxamine 5'-phosphate oxidase.